We begin with the raw amino-acid sequence, 546 residues long: High-affinity glucose transporter ght5 (546 aa).

Over 1 to 9 (MGKNLTIVM) the chain is Cytoplasmic. A helical membrane pass occupies residues 10 to 30 (LVFVSMAGWMFGADTGSIGGI). Residues 31–58 (TNMRDFQSRFADRYNPVTDSYSYSSARQ) lie on the Extracellular side of the membrane. The helical transmembrane segment at 59 to 79 (GLITGMVNVGSFFGCFLSSPL) threads the bilayer. Residues 80–87 (MDRIGKRT) are Cytoplasmic-facing. The helical transmembrane segment at 88–108 (SIMFWTIVYLIGIILQVTAVP) threads the bilayer. Residues 109-112 (SWVQ) lie on the Extracellular side of the membrane. Residues 113 to 133 (IMVAKIWTGLSIGALSVLAPG) traverse the membrane as a helical segment. Residues 134 to 144 (FQSEVAPADLR) are Cytoplasmic-facing. Residues 145–165 (GTIVTTYQLAVTGGIFIAACI) form a helical membrane-spanning segment. At 166-179 (NMGTHKLHKTAQWR) the chain is on the extracellular side. The chain crosses the membrane as a helical span at residues 180-200 (VSMGINLLWGIITFIGISFLP). Residues 201–266 (ESPRYLISVG…IFGPDIRYRT (66 aa)) lie on the Cytoplasmic side of the membrane. The helical transmembrane segment at 267–285 (FLGLGVMSLQQLTGDNYYF) threads the bilayer. Over 286 to 301 (YYGFEVFEGTGMNSPY) the chain is Extracellular. Residues 302–322 (LSALILDAVNFGCTFGGLFVL) form a helical membrane-spanning segment. Over 323–328 (EFFGRR) the chain is Cytoplasmic. The helical transmembrane segment at 329 to 349 (MPLIIGALWQSITFFIYAAVG) threads the bilayer. The Extracellular portion of the chain corresponds to 350–363 (NRALTRKNGTSNHR). N-linked (GlcNAc...) asparagine glycosylation occurs at N357. The chain crosses the membrane as a helical span at residues 364–384 (AGAVMIVFSCLFIFSFAQTWG). Over 385 to 404 (PAAYVIVGESYPIRYRSKCA) the chain is Cytoplasmic. The helical transmembrane segment at 405-425 (AVATTGNWLWGFLISFFTPFI) threads the bilayer. Over 426–432 (TNSIGFK) the chain is Extracellular. Residues 433 to 453 (YGYIFAACNLCAACIIFLFAH) traverse the membrane as a helical segment. Residues 454-546 (ETKGLTLEEI…SYHDQEEQFA (93 aa)) are Cytoplasmic-facing. The segment at 486-546 (KQQEEVREKS…SYHDQEEQFA (61 aa)) is disordered. The segment covering 487–496 (QQEEVREKSR) has biased composition (basic and acidic residues). Acidic residues predominate over residues 509–519 (VDGEEGIEDSS). Low complexity predominate over residues 520–529 (NDISSTTSSD). 2 positions are modified to phosphoserine: S528 and S537. Residues 530 to 546 (GRAKPESSYHDQEEQFA) show a composition bias toward basic and acidic residues.

The protein belongs to the major facilitator superfamily. Sugar transporter (TC 2.A.1.1) family.

The protein resides in the membrane. Functionally, high-affinity glucose transporter. The sequence is that of High-affinity glucose transporter ght5 (ght5) from Schizosaccharomyces pombe (strain 972 / ATCC 24843) (Fission yeast).